The primary structure comprises 389 residues: Chalcone synthase 9 (389 aa).

Residue cysteine 164 is part of the active site.

The protein belongs to the thiolase-like superfamily. Chalcone/stilbene synthases family.

It catalyses the reaction (E)-4-coumaroyl-CoA + 3 malonyl-CoA + 3 H(+) = 2',4,4',6'-tetrahydroxychalcone + 3 CO2 + 4 CoA. The protein operates within secondary metabolite biosynthesis; flavonoid biosynthesis. In terms of biological role, the primary product of this enzyme is 4,2',4',6'-tetrahydroxychalcone (also termed naringenin-chalcone or chalcone) which can under specific conditions spontaneously isomerize into naringenin. This is Chalcone synthase 9 (CHS9) from Medicago sativa (Alfalfa).